A 430-amino-acid polypeptide reads, in one-letter code: Adenylosuccinate synthetase (430 aa).

Residues 12-18 and 40-42 each bind GTP; these read GDEGKGK and GHT. Catalysis depends on D13, which acts as the Proton acceptor. The Mg(2+) site is built by D13 and G40. Residues 13-16, 38-41, T128, R142, Q223, T238, and R302 contribute to the IMP site; these read DEGK and NAGH. H41 (proton donor) is an active-site residue. 298 to 304 provides a ligand contact to substrate; it reads TTTGRPR. GTP-binding positions include R304, 330–332, and 412–414; these read CID and SVG.

Belongs to the adenylosuccinate synthetase family. Homodimer. Mg(2+) serves as cofactor.

The protein resides in the cytoplasm. It carries out the reaction IMP + L-aspartate + GTP = N(6)-(1,2-dicarboxyethyl)-AMP + GDP + phosphate + 2 H(+). Its pathway is purine metabolism; AMP biosynthesis via de novo pathway; AMP from IMP: step 1/2. Functionally, plays an important role in the de novo pathway of purine nucleotide biosynthesis. Catalyzes the first committed step in the biosynthesis of AMP from IMP. The protein is Adenylosuccinate synthetase of Streptococcus thermophilus (strain CNRZ 1066).